Consider the following 692-residue polypeptide: Potassium-transporting ATPase ATP-binding subunit (692 aa).

4 consecutive transmembrane segments (helical) span residues 50–70, 74–94, 240–260, and 266–286; these read PIMFVVEIGFVITFILSFLPS, SIPGWFNITVSLILLFTVLFA, LTLIFLIVVVTLPIFTNYLGF, and VLVALLVCLIPTTIGGLLSAI. Residue aspartate 319 is the 4-aspartylphosphate intermediate of the active site. Residues aspartate 356, glutamate 360, 388-395, and lysine 407 contribute to the ATP site; that span reads FKAETRMS. Mg(2+) is bound by residues aspartate 530 and aspartate 534. A run of 3 helical transmembrane segments spans residues 600-620, 628-648, and 672-692; these read FAIIPAMFTLAIPQMEALNIM, AILSALLFNAVIIPLLIPLAM, and GGVIVPFIGIKIIDMIVGLFI.

The protein belongs to the cation transport ATPase (P-type) (TC 3.A.3) family. Type IA subfamily. The system is composed of three essential subunits: KdpA, KdpB and KdpC.

Its subcellular location is the cell membrane. It catalyses the reaction K(+)(out) + ATP + H2O = K(+)(in) + ADP + phosphate + H(+). Its function is as follows. Part of the high-affinity ATP-driven potassium transport (or Kdp) system, which catalyzes the hydrolysis of ATP coupled with the electrogenic transport of potassium into the cytoplasm. This subunit is responsible for energy coupling to the transport system and for the release of the potassium ions to the cytoplasm. The protein is Potassium-transporting ATPase ATP-binding subunit of Bacillus thuringiensis (strain Al Hakam).